Here is a 125-residue protein sequence, read N- to C-terminus: Fluoride-specific ion channel FluC (125 aa).

4 consecutive transmembrane segments (helical) span residues 6 to 26, 36 to 56, 68 to 88, and 97 to 117; these read AWIALAGAGGTLSRYALSGLV, WGTWVVNGLGCFLFGMIWALA, FIVLTGFMGAFTTFSTFAFEA, and WLLAAIHLIGQNSLGLVCVFL. Residues Gly-76 and Thr-79 each coordinate Na(+).

The protein belongs to the fluoride channel Fluc/FEX (TC 1.A.43) family.

It localises to the cell inner membrane. The catalysed reaction is fluoride(in) = fluoride(out). With respect to regulation, na(+) is not transported, but it plays an essential structural role and its presence is essential for fluoride channel function. Its function is as follows. Fluoride-specific ion channel. Important for reducing fluoride concentration in the cell, thus reducing its toxicity. This is Fluoride-specific ion channel FluC from Nitrosococcus oceani (strain ATCC 19707 / BCRC 17464 / JCM 30415 / NCIMB 11848 / C-107).